The chain runs to 208 residues: Holliday junction branch migration complex subunit RuvA (208 aa).

Positions 1–63 (MIAFVSGPVA…EDSLTLYGFA (63 aa)) are domain I. The interval 64–142 (NDDERQVFEL…EPVGAHIGQQ (79 aa)) is domain II. The flexible linker stretch occupies residues 143-147 (GIGTP). Residues 148–208 (VTSGWRDQLQ…AALQTLNRAR (61 aa)) are domain III.

The protein belongs to the RuvA family. In terms of assembly, homotetramer. Forms an RuvA(8)-RuvB(12)-Holliday junction (HJ) complex. HJ DNA is sandwiched between 2 RuvA tetramers; dsDNA enters through RuvA and exits via RuvB. An RuvB hexamer assembles on each DNA strand where it exits the tetramer. Each RuvB hexamer is contacted by two RuvA subunits (via domain III) on 2 adjacent RuvB subunits; this complex drives branch migration. In the full resolvosome a probable DNA-RuvA(4)-RuvB(12)-RuvC(2) complex forms which resolves the HJ.

It localises to the cytoplasm. The RuvA-RuvB-RuvC complex processes Holliday junction (HJ) DNA during genetic recombination and DNA repair, while the RuvA-RuvB complex plays an important role in the rescue of blocked DNA replication forks via replication fork reversal (RFR). RuvA specifically binds to HJ cruciform DNA, conferring on it an open structure. The RuvB hexamer acts as an ATP-dependent pump, pulling dsDNA into and through the RuvAB complex. HJ branch migration allows RuvC to scan DNA until it finds its consensus sequence, where it cleaves and resolves the cruciform DNA. The protein is Holliday junction branch migration complex subunit RuvA of Streptomyces griseus subsp. griseus (strain JCM 4626 / CBS 651.72 / NBRC 13350 / KCC S-0626 / ISP 5235).